The following is a 474-amino-acid chain: Coronin-1C (474 aa).

WD repeat units follow at residues 78 to 118 (GHTG…LTLS), 128 to 168 (GHSK…ALIN), 172 to 202 (MHSDMIYNVSWSRNGSLICTASKDKKVRVID), 215 to 249 (AHEGARPMRAIFLADGNVFTTGFSRMSERQLALWN), and 263 to 303 (DTSN…PYVH). Residues 435–474 (VQNEAKLDEILKEIKSIKETICSQDERISKLEQQLAKMAA) adopt a coiled-coil conformation. Residue K446 is modified to N6-acetyllysine.

Belongs to the WD repeat coronin family. Homotrimer. Binds F-actin. Interacts with RCC2. Interacts preferentially with nucleotide-free and GDP-bound RAC1. Interacts with VIM (via head domain). Interacts with MICAL2; this interaction recruits MICAL2 to the actin filaments. In terms of tissue distribution, detected in skeletal muscle (at protein level). Detected in fibroblasts (at protein level). Ubiquitous.

It is found in the cell membrane. The protein resides in the cell projection. The protein localises to the lamellipodium. Its subcellular location is the ruffle membrane. It localises to the cytoplasm. It is found in the cytoskeleton. The protein resides in the cell cortex. The protein localises to the endosome membrane. Plays a role in directed cell migration by regulating the activation and subcellular location of RAC1. Increases the presence of activated RAC1 at the leading edge of migrating cells. Required for normal organization of the cytoskeleton, including the actin cytoskeleton, microtubules and the vimentin intermediate filaments. Required for normal cell proliferation, cell migration, and normal formation of lamellipodia. Plays a role in endoplasmic reticulum-associated endosome fission: localizes to endosome membrane tubules and promotes recruitment of TMCC1, leading to recruitment of the endoplasmic reticulum to endosome tubules for fission. Endosome membrane fission of early and late endosomes is essential to separate regions destined for lysosomal degradation from carriers to be recycled to the plasma membrane. Required for normal distribution of mitochondria within cells. The protein is Coronin-1C (Coro1c) of Mus musculus (Mouse).